Reading from the N-terminus, the 93-residue chain is Small ribosomal subunit protein uS19 (93 aa).

Belongs to the universal ribosomal protein uS19 family.

In terms of biological role, protein S19 forms a complex with S13 that binds strongly to the 16S ribosomal RNA. The protein is Small ribosomal subunit protein uS19 of Nitratidesulfovibrio vulgaris (strain ATCC 29579 / DSM 644 / CCUG 34227 / NCIMB 8303 / VKM B-1760 / Hildenborough) (Desulfovibrio vulgaris).